The primary structure comprises 683 residues: MRQQQMRNIGIMAHVDAGKTTTTERMLFYTGKIHRMGEIDDGATTMDWMVQEQERGITIQSAATTVRWREVDITIIDTPGHVDFTAEVERALRVLDGVVVVLCAVGRVQPQTETVWYQADRYDIPRVCFVNKMDRIGADFFSVLDQVHNKFGIDAVALQIPIGSGTSFEGVIDLITMKEIFWDAASSGEQMEYRPIQSARIAQAREAREKMLDVISIYSDEVTECVLAGEHVPVQLLHAEIRKAVRERRYVPFLCGSSRHNLGVQPLLDAVVEYLPAPQERKAVEGFHVQKKEPVFIAPTAEGPLLALVFKIQYEREAGLLCYVRMYSGKLRTGDSIVNIGKKKRERVYRILRMHSNKSETVECIQAGDIAVIVGLKSAQTGDSVGDGSCPVVLESMHFPEPVISVSLEPMDASSRDKLQETLGILSREDPTFSVREDAETGQLLISGMGELHLDVLTTRMREDFNVQVRVGKPHVTYRESIRKTVERTLRVQRVIGGKEYMAGLTLRVEARKRGAGNEFFCQVKELRGTVCTAHTAPAEIIGAVEHAIRGAWDGGIQSGYPCVDVGVHLLSVEYQELTSSPFIFEAAAVQAFGEACVAAEPYVLEPIMSVELSCAQENVGDVMNVIIQRGGIILGMDSKHGRELVHAQAPMKKMFGFSTDVRSASRGGASFTMRFSHFESCA.

Residues Gln4–Gln279 enclose the tr-type G domain. Residues Ala13 to Thr20, Asp77 to His81, and Asn131 to Asp134 contribute to the GTP site.

The protein belongs to the TRAFAC class translation factor GTPase superfamily. Classic translation factor GTPase family. EF-G/EF-2 subfamily.

It is found in the cytoplasm. Functionally, catalyzes the GTP-dependent ribosomal translocation step during translation elongation. During this step, the ribosome changes from the pre-translocational (PRE) to the post-translocational (POST) state as the newly formed A-site-bound peptidyl-tRNA and P-site-bound deacylated tRNA move to the P and E sites, respectively. Catalyzes the coordinated movement of the two tRNA molecules, the mRNA and conformational changes in the ribosome. The polypeptide is Elongation factor G 2 (fusB) (Treponema pallidum (strain Nichols)).